The sequence spans 92 residues: Evasin P942 (92 aa).

The first 26 residues, 1-26 (MEVKTFAFLQIAVLIALGLHLAPAGS), serve as a signal peptide directing secretion. Cystine bridges form between C44–C63, C48–C65, and C59–C76. N47 is a glycosylation site (N-linked (GlcNAc...) asparagine). N70 carries N-linked (GlcNAc...) asparagine glycosylation.

It localises to the secreted. In terms of biological role, salivary chemokine-binding protein which binds to host chemokines CXCL1, CXCL2, CXCL3, CXCL4, CXCL5, CXCL6, CXCL10, CXCL11 and CXCL13. This chain is Evasin P942, found in Ixodes ricinus (Common tick).